We begin with the raw amino-acid sequence, 149 residues long: Large ribosomal subunit protein uL13 (149 aa).

It belongs to the universal ribosomal protein uL13 family. In terms of assembly, part of the 50S ribosomal subunit.

Functionally, this protein is one of the early assembly proteins of the 50S ribosomal subunit, although it is not seen to bind rRNA by itself. It is important during the early stages of 50S assembly. The chain is Large ribosomal subunit protein uL13 from Borrelia duttonii (strain Ly).